The sequence spans 825 residues: Protein SEY1 homolog 2 (825 aa).

Residues 1-21 (MDEVSPTKHFTSKPLLPTKTP) are disordered. At 1-728 (MDEVSPTKHF…EKENSEIKYQ (728 aa)) the chain is on the cytoplasmic side. Residues 83-305 (GMDYNAVGIL…FLPQYNKEIP (223 aa)) form the GB1/RHD3-type G domain. A GTP-binding site is contributed by 93-100 (GAQSSGKS). A coiled-coil region spans residues 373 to 397 (KVFTKQIDAALERYKEVTERYMETI). A helical transmembrane segment spans residues 729-749 (IPLYLIVLVVFFGFDEFIAIL). Topologically, residues 750–752 (TNP) are lumenal. The chain crosses the membrane as a helical span at residues 753–773 (LLFILTLIIGGGVYIGYKLNL). Over 774–825 (GGVAKNYIQYLLSMSLSSTMEYLRTIPFFTPLIDKVWPKDDNNTEETQEEIK) the chain is Cytoplasmic.

This sequence belongs to the TRAFAC class dynamin-like GTPase superfamily. GB1/RHD3 GTPase family. RHD3 subfamily.

It is found in the endoplasmic reticulum membrane. In terms of biological role, probable GTP-binding protein that may be involved in cell development. The sequence is that of Protein SEY1 homolog 2 from Entamoeba histolytica (strain ATCC 30459 / HM-1:IMSS / ABRM).